A 471-amino-acid polypeptide reads, in one-letter code: Glutamate--tRNA ligase (471 aa).

A 'HIGH' region motif is present at residues P9–G19. Residues C98, C100, C125, and H127 each contribute to the Zn(2+) site. The 'KMSKS' region motif lies at K237–R241. Position 240 (K240) interacts with ATP.

It belongs to the class-I aminoacyl-tRNA synthetase family. Glutamate--tRNA ligase type 1 subfamily. Monomer. It depends on Zn(2+) as a cofactor.

Its subcellular location is the cytoplasm. It catalyses the reaction tRNA(Glu) + L-glutamate + ATP = L-glutamyl-tRNA(Glu) + AMP + diphosphate. Its function is as follows. Catalyzes the attachment of glutamate to tRNA(Glu) in a two-step reaction: glutamate is first activated by ATP to form Glu-AMP and then transferred to the acceptor end of tRNA(Glu). The chain is Glutamate--tRNA ligase from Salmonella dublin (strain CT_02021853).